The sequence spans 90 residues: Probable Fe(2+)-trafficking protein (90 aa).

It belongs to the Fe(2+)-trafficking protein family.

Functionally, could be a mediator in iron transactions between iron acquisition and iron-requiring processes, such as synthesis and/or repair of Fe-S clusters in biosynthetic enzymes. The protein is Probable Fe(2+)-trafficking protein of Vibrio parahaemolyticus serotype O3:K6 (strain RIMD 2210633).